Reading from the N-terminus, the 1938-residue chain is MSLEHEKDPGWQYLKRSREQQLADQSRPYDSKKNVWIPDAEEGYIEGVIKGPGPKADTVIVTAGGKDVTLKKDIVQEVNPPKFEKTEDMSNLTFLNDASVLWNLRSRYAAMLIYTYSGLFCVVINPYKRLPIYTDSVARMFMGKRRTEMPPHLFAVSDQAYRYMLQDHENQSMLITGESGAGKTENTKKVICYFATVGASQKAALKEGEKEVTLEDQIVQTNPVLEAFGNAKTVRNNNSSRFGKFIRIHFNKHGTLASCDIEHYLLEKSRVIRQAPGERCYHIFYQIYSDFKPQLRDELLLNHPISNYWFVAQAELLIDGIDDTEEFQLTDEAFDVLKFSPTEKMDCYRLMSAHMHMGNMKFKQRPREEQAEPDGQDEAERACNMYGIDVDQFLKALVSPRVKVGTEWVSKGQNVDQVHWAIGAMAKGLYARVFHWLVKKCNLTLDQKGIDRDYFIGVLDIAGFEIFDFNSFEQLWINFVNEKLQQFFNHHMFVLEQEEYAREGIQWTFIDFGLDLQACIELIEKPLGIISMLDEECIVPKATDMTLAQKLTDQHLGKHPNFEKPKPPKGKQGEAHFAMRHYAGTVRYNVLNWLEKNKDPLNDTVVSVMKASKKNDLLVEIWQDYTTQEEAAAAAKAGGGRKGGKSGSFMTVSMMYRESLNKLMTMLHKTHPHFIRCIIPNEKKQSGMIDAALVLNQLTCNGVLEGIRICRKGFPNRTQHPDFVQRYAILAAKEAKSSDDMKTCAGAILQALINQKQLNDEQFRIGHTKVFFKAGVVAHIEDLRDDKLNQIITGFQSAIRWYTATADAGARRKQLNSYIILQRNIRSWCVLRTWDWFLLFGKLRPQLKCGKMAEEMIKMAEEQKVLEAEAKKAESARKSQEEAYAKLSAERSKLLEALELTQGGSAAIEEKLTRLNSARQEVEKSLNDANDRLSEHEEKNADLEKQRRKAQQEVENLKKSIEAVDGNLAKSLEEKAAKENQIHSLQDEMNSQDETIGKINKEKKLLEENNRQLVDDLQAEEAKQAQANRLRGKLEQTLDEMEEAVEREKRIRAETEKSKRKVEGELKGAQETIDELSAIKLETDASLKKKEADIHALGVRIEDEQALANRLTRQSKENAQRIIEIEDELEHERQSRSKADRARAELQRELDELNERLDEQNKQLEIQQDNNKKKDSEIIKFRRDLDEKNMANEDQMAMIRRKNNDQISALTNTLDALQKSKAKIEKEKGVLQKELDDINAQVDQETKSRVEQERLAKQYEIQVAELQQKVDEQSRQIGEYTSTKGRLSNDNSDLARQVEELEIHLATINRAKTAFSSQLVEAKKAAEDELHERQEFHAACKNLEHELDQCHELLEEQINGKDDIQRQLSRINSEISQWKARYEGEGLVGSEELEELKRKQMNRVMDLQEALSAAQNKVISLEKAKGKLLAETEDARSDVDRHLTVIASLEKKQRAFDKIVDDWKRKVDDIQKEIDATTRDSRNTSTEVFKLRSSMDNLSEQIETLRRENKIFSQEIRDINEQITQGGRTYQEVHKSVRRLEQEKDELQHALDEAEAALEAEESKVLRLQIEVQQIRSEIEKRIQEKEEEFENTRKNHQRALESIQASLETEAKSKAELARAKKKLETDINQLEIALDHANKANVDAQKNLKKLFDQVKELQGQVDDEQRRREEIRENYLAAEKRLAIALSESEDLAHRIEASDKHKKQLEIEQAELKSSNTELIGNNAALSAMKRKVENEVQIARNELDEYLNELKASEERARKAAADADRLAEEVRQEQEHAVHVDRQRKSLELNAKELQAKIDDAERAMIQFGAKALAKVEDRVRSLEAELHSEQRRHQESIKGYTKQERRARELQFQVEEDKKAFDRLQENVEKLQQKIRVQKRQIEEAEEVATQNLSKFRQIQLALENAEERAEVAENSLVRMRGQVVRSATNK.

A disordered region spans residues 1–27 (MSLEHEKDPGWQYLKRSREQQLADQSR). Over residues 16 to 27 (RSREQQLADQSR) the composition is skewed to basic and acidic residues. Positions 30 to 80 (DSKKNVWIPDAEEGYIEGVIKGPGPKADTVIVTAGGKDVTLKKDIVQEVNP) constitute a Myosin N-terminal SH3-like domain. The 702-residue stretch at 84–785 (EKTEDMSNLT…VVAHIEDLRD (702 aa)) folds into the Myosin motor domain. The residue at position 128 (Lys128) is an N6,N6,N6-trimethyllysine. An ATP-binding site is contributed by 177-184 (GESGAGKT). 2 actin-binding regions span residues 660 to 682 (LNKLMTMLHKTHPHFIRCIIPNE) and 764 to 778 (RIGHTKVFFKAGVVA). The segment at 846 to 1170 (QLKCGKMAEE…NKQLEIQQDN (325 aa)) is alpha-helical tailpiece (short S2). The segment at 846–1938 (QLKCGKMAEE…GQVVRSATNK (1093 aa)) is rodlike tail (S2 and LMM domains). Residues 846-1938 (QLKCGKMAEE…GQVVRSATNK (1093 aa)) adopt a coiled-coil conformation. A disordered region spans residues 919–951 (RQEVEKSLNDANDRLSEHEEKNADLEKQRRKAQ). Residues 920–951 (QEVEKSLNDANDRLSEHEEKNADLEKQRRKAQ) are compositionally biased toward basic and acidic residues. A light meromyosin (LMM) region spans residues 1171–1938 (NKKKDSEIIK…GQVVRSATNK (768 aa)).

Belongs to the TRAFAC class myosin-kinesin ATPase superfamily. Myosin family. In terms of assembly, muscle myosin is a hexameric protein that consists of 2 heavy chain subunits (MHC), 2 alkali light chain subunits (MLC) and 2 regulatory light chain subunits (MLC-2). Interacts with itr-1 (via c-terminal coiled coil domain). In terms of tissue distribution, found exclusively in the pharyngeal muscle.

Its subcellular location is the cytoplasm. The protein resides in the myofibril. Its function is as follows. Muscle contraction. This Caenorhabditis elegans protein is Myosin-1.